A 445-amino-acid polypeptide reads, in one-letter code: Chromosomal replication initiator protein DnaA (445 aa).

The segment at 1–71 is domain I, interacts with DnaA modulators; sequence MEEVWLQAQS…SVQSLTDSQT (71 aa). The tract at residues 71–108 is domain II; that stretch reads TKIELLIAKPKTEKPKQPAASEVTAAEPEACSGPDHST. A disordered region spans residues 83 to 106; sequence EKPKQPAASEVTAAEPEACSGPDH. The domain III, AAA+ region stretch occupies residues 109–325; sequence NLNPKYTFDT…GMLIRLGAVS (217 aa). Residues Gly153, Gly155, Lys156, and Thr157 each coordinate ATP. The domain IV, binds dsDNA stretch occupies residues 326–445; sequence SLTGKNITLD…VDTLRKGLLS (120 aa).

It belongs to the DnaA family. Oligomerizes as a right-handed, spiral filament on DNA at oriC.

It localises to the cytoplasm. Plays an essential role in the initiation and regulation of chromosomal replication. ATP-DnaA binds to the origin of replication (oriC) to initiate formation of the DNA replication initiation complex once per cell cycle. Binds the DnaA box (a 9 base pair repeat at the origin) and separates the double-stranded (ds)DNA. Forms a right-handed helical filament on oriC DNA; dsDNA binds to the exterior of the filament while single-stranded (ss)DNA is stabiized in the filament's interior. The ATP-DnaA-oriC complex binds and stabilizes one strand of the AT-rich DNA unwinding element (DUE), permitting loading of DNA polymerase. After initiation quickly degrades to an ADP-DnaA complex that is not apt for DNA replication. Binds acidic phospholipids. This is Chromosomal replication initiator protein DnaA from Geobacter sulfurreducens (strain ATCC 51573 / DSM 12127 / PCA).